The following is a 110-amino-acid chain: Large ribosomal subunit protein uL22 (110 aa).

Belongs to the universal ribosomal protein uL22 family. As to quaternary structure, part of the 50S ribosomal subunit.

In terms of biological role, this protein binds specifically to 23S rRNA; its binding is stimulated by other ribosomal proteins, e.g. L4, L17, and L20. It is important during the early stages of 50S assembly. It makes multiple contacts with different domains of the 23S rRNA in the assembled 50S subunit and ribosome. The globular domain of the protein is located near the polypeptide exit tunnel on the outside of the subunit, while an extended beta-hairpin is found that lines the wall of the exit tunnel in the center of the 70S ribosome. This is Large ribosomal subunit protein uL22 from Mycoplasmopsis pulmonis (strain UAB CTIP) (Mycoplasma pulmonis).